The primary structure comprises 2389 residues: Highly reducing polyketide synthase Dhc3 (2389 aa).

The region spanning 9–433 (DVPIAVVGLA…GTNGHAVLES (425 aa)) is the Ketosynthase family 3 (KS3) domain. Active-site for beta-ketoacyl synthase activity residues include Cys-181, His-316, and His-356. The segment at 551 to 861 (FVFTGQGAQW…LSGPVEQILN (311 aa)) is malonyl-CoA:ACP transacylase (MAT) domain. Catalysis depends on Ser-641, which acts as the For malonyltransferase activity. An N-terminal hotdog fold region spans residues 944-1079 (RSLIGAQVPM…GLITIDYADT (136 aa)). Residues 944-1263 (RSLIGAQVPM…VSELENDTEA (320 aa)) enclose the PKS/mFAS DH domain. The segment at 946–1262 (LIGAQVPMMD…RVSELENDTE (317 aa)) is dehydratase (DH) domain. His-976 acts as the Proton acceptor; for dehydratase activity in catalysis. Residues 1107-1263 (PDICSKEDFY…VSELENDTEA (157 aa)) are C-terminal hotdog fold. Asp-1173 serves as the catalytic Proton donor; for dehydratase activity. Positions 1673 to 1987 (GLLDTLAFIE…QGKHRGKLVL (315 aa)) are enoylreductase (ER) domain. The tract at residues 2011-2191 (ATYLFVGGLG…VAVDLGIMRD (181 aa)) is catalytic ketoreductase (KRc) domain. The Carrier domain maps to 2302–2379 (EAVSIITDAL…EFAEKIAEKS (78 aa)). Position 2339 is an O-(pantetheine 4'-phosphoryl)serine (Ser-2339).

The protein operates within mycotoxin biosynthesis. Functionally, highly reducing polyketide synthase; part of the gene cluster that mediates the biosynthesis of 10,11-dehydrocurvularin, a prevalent fungal phytotoxin with heat shock response and immune-modulatory activities. The highly reducing polyketide synthase Dhc3 is responsible for biosynthesis up to the tetraketide stage. The non-reducing polyketide synthase Dhc5 then conducts four additional chain extension cycles, producing the unreduced part of the nascent octaketide from C-1 to C-8 in 10,11-dehydrocurvularin. The chain is Highly reducing polyketide synthase Dhc3 (Dhc3) from Alternaria cinerariae.